Reading from the N-terminus, the 512-residue chain is Maturase K (512 aa).

This sequence belongs to the intron maturase 2 family. MatK subfamily.

Its subcellular location is the plastid. It localises to the chloroplast. Its function is as follows. Usually encoded in the trnK tRNA gene intron. Probably assists in splicing its own and other chloroplast group II introns. The protein is Maturase K of Oenothera glazioviana (Large-flowered evening primrose).